We begin with the raw amino-acid sequence, 200 residues long: Inner membrane-spanning protein YciB (200 aa).

A run of 6 helical transmembrane segments spans residues 7–27 (HPLF…VVNA), 32–52 (FAAT…SYVV), 56–76 (VPLM…LTLV), 93–113 (LFAA…AIMF), 126–146 (ILTF…EIIW), and 153–173 (FWVG…AIAQ).

Belongs to the YciB family.

It is found in the cell inner membrane. Functionally, plays a role in cell envelope biogenesis, maintenance of cell envelope integrity and membrane homeostasis. The protein is Inner membrane-spanning protein YciB of Bradyrhizobium sp. (strain BTAi1 / ATCC BAA-1182).